Here is a 400-residue protein sequence, read N- to C-terminus: Egl nine homolog 1 (400 aa).

The residue at position 2 (Ala-2) is an N-acetylalanine. Residues 6–20 (GGPGVLSASERDRQY) form a required for nuclear export region. Ser-12 is subject to Phosphoserine. Residues Cys-21, Cys-24, Cys-33, Cys-36, Cys-42, His-46, His-54, and Cys-58 each contribute to the Zn(2+) site. Residues 21–58 (CELCGKMENLLRCGRCRSSFYCCKEHQRQDWKKHKLVC) form an MYND-type; atypical zinc finger. A compositionally biased stretch (low complexity) spans 62–74 (EAPRAQPAPAQPR). Residues 62 to 161 (EAPRAQPAPA…PGGGLRPNGQ (100 aa)) are disordered. Ser-114 bears the Phosphoserine mark. Gly residues predominate over residues 142–157 (AGGGPGEALSPGGGLR). Cys-178 and Cys-185 each carry S-nitrosocysteine. Residues 218 to 228 (VSQKSDSSKDI) form a beta(2)beta(3) 'finger-like' loop region. The region spanning 271-369 (GRTKAMVACY…RYAITVWYFD (99 aa)) is the Fe2OG dioxygenase domain. S-nitrosocysteine is present on Cys-279. Positions 290 and 292 each coordinate Fe cation. 2 positions are modified to S-nitrosocysteine: Cys-300 and Cys-303. His-351 serves as a coordination point for Fe cation. Arg-360 contacts 2-oxoglutarate.

As to quaternary structure, monomer. Interacts with ING4; the interaction inhibits the hydroxylation of HIF alpha proteins. Interacts with PTGES3 (via PXLE motif); thereby recruiting EGLN1 to the HSP90 pathway to facilitate HIF alpha proteins hydroxylation. Interacts with LIMD1. Found in a complex composed of LIMD1, VHL, EGLN1/PHD2, ELOB and CUL2. Interacts with EPAS1. Interacts with CBFA2T3 and HIF1A. Fe(2+) serves as cofactor. Requires L-ascorbate as cofactor. Post-translationally, S-nitrosylation inhibits the enzyme activity up to 60% under aerobic conditions. Chelation of Fe(2+) has no effect on the S-nitrosylation. It is uncertain whether nitrosylation occurs on Cys-300 or Cys-303. Expressed in heart, brain liver, skeletal muscle and kidney. Low levels were detected in the lung. Constitutively expressed during differentiation of C2C12 skeletal myocytes.

The protein resides in the cytoplasm. The protein localises to the nucleus. The catalysed reaction is L-prolyl-[hypoxia-inducible factor alpha subunit] + 2-oxoglutarate + O2 = trans-4-hydroxy-L-prolyl-[hypoxia-inducible factor alpha subunit] + succinate + CO2. Cellular oxygen sensor that catalyzes, under normoxic conditions, the post-translational formation of 4-hydroxyproline in hypoxia-inducible factor (HIF) alpha proteins. Hydroxylates a specific proline found in each of the oxygen-dependent degradation (ODD) domains (N-terminal, NODD, and C-terminal, CODD) of HIF1A. Also hydroxylates HIF2A. Has a preference for the CODD site for both HIF1A and HIF1B. Hydroxylated HIFs are then targeted for proteasomal degradation via the von Hippel-Lindau ubiquitination complex. Under hypoxic conditions, the hydroxylation reaction is attenuated allowing HIFs to escape degradation resulting in their translocation to the nucleus, heterodimerization with HIF1B, and increased expression of hypoxy-inducible genes. EGLN1 is the most important isozyme under normoxia and, through regulating the stability of HIF1, involved in various hypoxia-influenced processes such as angiogenesis in retinal and cardiac functionality. Target proteins are preferentially recognized via a LXXLAP motif. The chain is Egl nine homolog 1 (Egln1) from Mus musculus (Mouse).